Consider the following 524-residue polypeptide: B3 domain-containing protein Os07g0183700 (524 aa).

Disordered stretches follow at residues 94 to 152 (DGEG…TSVS) and 191 to 232 (PLQP…FQTQ). The segment covering 100–109 (CAPPPSPIPA) has biased composition (pro residues). Composition is skewed to low complexity over residues 110 to 124 (GPAS…SAPA) and 200 to 232 (AAAA…FQTQ). Positions 336–434 (SFVKPLTYTD…EMFMAVRRTR (99 aa)) form a DNA-binding region, TF-B3.

The protein resides in the nucleus. The protein is B3 domain-containing protein Os07g0183700 of Oryza sativa subsp. japonica (Rice).